The sequence spans 122 residues: Ribonuclease P protein component (122 aa).

The protein belongs to the RnpA family. In terms of assembly, consists of a catalytic RNA component (M1 or rnpB) and a protein subunit.

The catalysed reaction is Endonucleolytic cleavage of RNA, removing 5'-extranucleotides from tRNA precursor.. RNaseP catalyzes the removal of the 5'-leader sequence from pre-tRNA to produce the mature 5'-terminus. It can also cleave other RNA substrates such as 4.5S RNA. The protein component plays an auxiliary but essential role in vivo by binding to the 5'-leader sequence and broadening the substrate specificity of the ribozyme. In Lactobacillus gasseri (strain ATCC 33323 / DSM 20243 / BCRC 14619 / CIP 102991 / JCM 1131 / KCTC 3163 / NCIMB 11718 / NCTC 13722 / AM63), this protein is Ribonuclease P protein component.